We begin with the raw amino-acid sequence, 53 residues long: Large ribosomal subunit protein bL32c (53 aa).

This sequence belongs to the bacterial ribosomal protein bL32 family.

It localises to the plastid. The protein localises to the chloroplast. The chain is Large ribosomal subunit protein bL32c from Coffea arabica (Arabian coffee).